A 433-amino-acid polypeptide reads, in one-letter code: Serine hydroxymethyltransferase (433 aa).

Residue Ala121 to Val123 coordinates (6S)-5,6,7,8-tetrahydrofolate. Lys227 carries the N6-(pyridoxal phosphate)lysine modification. Glu243 serves as a coordination point for (6S)-5,6,7,8-tetrahydrofolate.

Belongs to the SHMT family. As to quaternary structure, homodimer. It depends on pyridoxal 5'-phosphate as a cofactor.

The protein localises to the cytoplasm. It functions in the pathway amino-acid biosynthesis; glycine biosynthesis; glycine from L-serine: step 1/1. In terms of biological role, catalyzes the reversible interconversion of serine and glycine with a modified folate serving as the one-carbon carrier. Also exhibits a pteridine-independent aldolase activity toward beta-hydroxyamino acids, producing glycine and aldehydes, via a retro-aldol mechanism. This chain is Serine hydroxymethyltransferase, found in Saccharolobus islandicus (strain Y.N.15.51 / Yellowstone #2) (Sulfolobus islandicus).